We begin with the raw amino-acid sequence, 59 residues long: UPF0434 protein Shew_1640 (59 aa).

The protein belongs to the UPF0434 family.

This is UPF0434 protein Shew_1640 from Shewanella loihica (strain ATCC BAA-1088 / PV-4).